Consider the following 216-residue polypeptide: Small ribosomal subunit protein uS3 (216 aa).

The region spanning 24–93 (IKEFLEYRLA…NPQIDVIDVS (70 aa)) is the KH type-2 domain.

It belongs to the universal ribosomal protein uS3 family. In terms of assembly, part of the 30S ribosomal subunit.

Functionally, binds the lower part of the 30S subunit head. This is Small ribosomal subunit protein uS3 from Pyrobaculum calidifontis (strain DSM 21063 / JCM 11548 / VA1).